We begin with the raw amino-acid sequence, 228 residues long: Sugar fermentation stimulation protein homolog (228 aa).

Belongs to the SfsA family.

The chain is Sugar fermentation stimulation protein homolog from Desulfitobacterium hafniense (strain DSM 10664 / DCB-2).